Here is a 140-residue protein sequence, read N- to C-terminus: Nucleoside diphosphate kinase (140 aa).

Positions 11, 59, 87, 93, 104, and 114 each coordinate ATP. H117 serves as the catalytic Pros-phosphohistidine intermediate.

It belongs to the NDK family. As to quaternary structure, homotetramer. Mg(2+) serves as cofactor.

The protein resides in the cytoplasm. The catalysed reaction is a 2'-deoxyribonucleoside 5'-diphosphate + ATP = a 2'-deoxyribonucleoside 5'-triphosphate + ADP. It catalyses the reaction a ribonucleoside 5'-diphosphate + ATP = a ribonucleoside 5'-triphosphate + ADP. Its function is as follows. Major role in the synthesis of nucleoside triphosphates other than ATP. The ATP gamma phosphate is transferred to the NDP beta phosphate via a ping-pong mechanism, using a phosphorylated active-site intermediate. This Methylorubrum extorquens (strain CM4 / NCIMB 13688) (Methylobacterium extorquens) protein is Nucleoside diphosphate kinase.